We begin with the raw amino-acid sequence, 931 residues long: Protocadherin gamma-A4 (931 aa).

Residues methionine 1–alanine 28 form the signal peptide. 6 consecutive Cadherin domains span residues glutamate 29–phenylalanine 133, glycine 134–phenylalanine 242, threonine 243–valine 347, threonine 348–phenylalanine 452, proline 453–phenylalanine 567, and aspartate 570–alanine 682. Over glutamate 29 to tyrosine 692 the chain is Extracellular. Asparagine 419 and asparagine 545 each carry an N-linked (GlcNAc...) asparagine glycan. A helical membrane pass occupies residues leucine 693–alanine 713. Residues leucine 714–lysine 931 lie on the Cytoplasmic side of the membrane. Disordered regions lie at residues lysine 801–asparagine 840 and alanine 901–lysine 931. The segment covering asparagine 805–asparagine 840 has biased composition (polar residues). Basic residues predominate over residues asparagine 921 to lysine 931.

The protein resides in the cell membrane. In terms of biological role, potential calcium-dependent cell-adhesion protein. May be involved in the establishment and maintenance of specific neuronal connections in the brain. The polypeptide is Protocadherin gamma-A4 (PCDHGA4) (Pan troglodytes (Chimpanzee)).